Consider the following 768-residue polypeptide: Transferrin receptor protein 1 (768 aa).

Residues Met1–Tyr68 lie on the Cytoplasmic side of the membrane. Positions Met1 to Cys70 are mediates interaction with SH3BP4. A phosphoserine mark is found at Ser10 and Ser19. Phosphotyrosine is present on Tyr20. The short motif at Tyr20–Phe23 is the Endocytosis signal element. Thr21 carries the post-translational modification Phosphothreonine. A Phosphoserine modification is found at Ser24. The Stop-transfer sequence signature appears at Lys61–Arg64. The helical transmembrane segment at Val69–Leu89 threads the bilayer. Cys70 carries the S-palmitoyl cysteine lipid modification. Over Ala90–Phe768 the chain is Extracellular. One can recognise a PA domain in the interval Ser231 to Phe321. Residues Asn259 and Asn325 are each glycosylated (N-linked (GlcNAc...) asparagine). Positions Thr577 to Phe768 are ligand-binding. The Cell attachment site signature appears at Arg654–Asp656. N-linked (GlcNAc...) asparagine glycosylation is found at Asn730 and Asn735.

The protein belongs to the peptidase M28 family. M28B subfamily. Homodimer; disulfide-linked. Binds one transferrin or HFE molecule per subunit. Interacts with SH3BP4. Interacts with SH3BP3. Interacts with STEAP3; facilitates TFRC endocytosis in erythroid precursor cells. In terms of processing, stearoylated by ZDHHC6 which inhibits TFRC-mediated activation of the JNK pathway and promotes mitochondrial fragmentation. Stearoylation does not affect iron uptake.

The protein resides in the cell membrane. The protein localises to the melanosome. Its function is as follows. Cellular uptake of iron occurs via receptor-mediated endocytosis of ligand-occupied transferrin receptor into specialized endosomes. Endosomal acidification leads to iron release. The apotransferrin-receptor complex is then recycled to the cell surface with a return to neutral pH and the concomitant loss of affinity of apotransferrin for its receptor. Transferrin receptor is necessary for development of erythrocytes and the nervous system. Positively regulates T and B cell proliferation through iron uptake. Acts as a lipid sensor that regulates mitochondrial fusion by regulating activation of the JNK pathway. When dietary levels of stearate (C18:0) are low, promotes activation of the JNK pathway, resulting in HUWE1-mediated ubiquitination and subsequent degradation of the mitofusin MFN2 and inhibition of mitochondrial fusion. When dietary levels of stearate (C18:0) are high, TFRC stearoylation inhibits activation of the JNK pathway and thus degradation of the mitofusin MFN2. Mediates uptake of NICOL1 into fibroblasts where it may regulate extracellular matrix production. The polypeptide is Transferrin receptor protein 1 (TFRC) (Sus scrofa (Pig)).